The sequence spans 125 residues: Large ribosomal subunit protein bL12 (125 aa).

This sequence belongs to the bacterial ribosomal protein bL12 family. In terms of assembly, homodimer. Part of the ribosomal stalk of the 50S ribosomal subunit. Forms a multimeric L10(L12)X complex, where L10 forms an elongated spine to which 2 to 4 L12 dimers bind in a sequential fashion. Binds GTP-bound translation factors.

Forms part of the ribosomal stalk which helps the ribosome interact with GTP-bound translation factors. Is thus essential for accurate translation. The chain is Large ribosomal subunit protein bL12 from Polaromonas sp. (strain JS666 / ATCC BAA-500).